Here is a 31-residue protein sequence, read N- to C-terminus: MLTITSYFGFLLAALTITSVLFIGLNKIRLI.

The chain crosses the membrane as a helical span at residues 4–24 (ITSYFGFLLAALTITSVLFIG).

Belongs to the PetL family. In terms of assembly, the 4 large subunits of the cytochrome b6-f complex are cytochrome b6, subunit IV (17 kDa polypeptide, PetD), cytochrome f and the Rieske protein, while the 4 small subunits are PetG, PetL, PetM and PetN. The complex functions as a dimer.

Its subcellular location is the plastid. It localises to the chloroplast thylakoid membrane. In terms of biological role, component of the cytochrome b6-f complex, which mediates electron transfer between photosystem II (PSII) and photosystem I (PSI), cyclic electron flow around PSI, and state transitions. PetL is important for photoautotrophic growth as well as for electron transfer efficiency and stability of the cytochrome b6-f complex. The polypeptide is Cytochrome b6-f complex subunit 6 (Nandina domestica (Heavenly bamboo)).